Here is a 346-residue protein sequence, read N- to C-terminus: N(4)-(beta-N-acetylglucosaminyl)-L-asparaginase (346 aa).

Positions 1–23 (MARKSNLPVLLVPFLLCQALVRC) are cleaved as a signal peptide. A Blocked amino end (Ser) modification is found at serine 24. N-linked (GlcNAc...) asparagine glycosylation occurs at asparagine 38. 2 cysteine pairs are disulfide-bonded: cysteine 64-cysteine 69 and cysteine 163-cysteine 179. The active-site Nucleophile is the threonine 206. Substrate is bound by residues 234-237 (RVGD) and 257-260 (TGNG). Cysteines 286 and 306 form a disulfide. A glycan (N-linked (GlcNAc...) asparagine) is linked at asparagine 308. The cysteines at positions 317 and 345 are disulfide-linked.

Belongs to the Ntn-hydrolase family. As to quaternary structure, heterotetramer of two alpha and two beta chains arranged as a dimer of alpha/beta heterodimers. Cleaved into an alpha and beta chain by autocatalysis; this activates the enzyme. The N-terminal residue of the beta subunit is responsible for the nucleophile hydrolase activity. Post-translationally, N-glycosylated.

The protein localises to the lysosome. It carries out the reaction N(4)-(beta-N-acetyl-D-glucosaminyl)-L-asparagine + H2O = N-acetyl-beta-D-glucosaminylamine + L-aspartate + H(+). In terms of biological role, cleaves the GlcNAc-Asn bond which joins oligosaccharides to the peptide of asparagine-linked glycoproteins. This is N(4)-(beta-N-acetylglucosaminyl)-L-asparaginase (AGA) from Homo sapiens (Human).